Consider the following 233-residue polypeptide: Uridylate kinase (233 aa).

ATP is bound by residues 8–11 (KLSG), Gly51, and Arg55. UMP is bound by residues Asp68 and 129 to 136 (TSNPFFTT). Residues Thr156, Tyr162, and Asp165 each coordinate ATP.

Belongs to the UMP kinase family. In terms of assembly, homohexamer.

The protein localises to the cytoplasm. It catalyses the reaction UMP + ATP = UDP + ADP. The protein operates within pyrimidine metabolism; CTP biosynthesis via de novo pathway; UDP from UMP (UMPK route): step 1/1. With respect to regulation, inhibited by UTP. Catalyzes the reversible phosphorylation of UMP to UDP. The sequence is that of Uridylate kinase from Thermosipho melanesiensis (strain DSM 12029 / CIP 104789 / BI429).